We begin with the raw amino-acid sequence, 274 residues long: Phosphatidylglycerol--prolipoprotein diacylglyceryl transferase (274 aa).

Helical transmembrane passes span W24–S44, L60–Y80, W96–F116, and L122–G142. Residue R143 participates in a 1,2-diacyl-sn-glycero-3-phospho-(1'-sn-glycerol) binding. 3 helical membrane passes run A182 to L202, G207 to F227, and V241 to V261.

It belongs to the Lgt family.

It is found in the cell inner membrane. The catalysed reaction is L-cysteinyl-[prolipoprotein] + a 1,2-diacyl-sn-glycero-3-phospho-(1'-sn-glycerol) = an S-1,2-diacyl-sn-glyceryl-L-cysteinyl-[prolipoprotein] + sn-glycerol 1-phosphate + H(+). Its pathway is protein modification; lipoprotein biosynthesis (diacylglyceryl transfer). Catalyzes the transfer of the diacylglyceryl group from phosphatidylglycerol to the sulfhydryl group of the N-terminal cysteine of a prolipoprotein, the first step in the formation of mature lipoproteins. The chain is Phosphatidylglycerol--prolipoprotein diacylglyceryl transferase from Rhodospirillum rubrum (strain ATCC 11170 / ATH 1.1.1 / DSM 467 / LMG 4362 / NCIMB 8255 / S1).